Consider the following 486-residue polypeptide: MATFKDACYHYKRINKLNQTVLKLGVNDTWRPSPPTKYKGWCLDCCQHTDLTYCRGCTIYHVCQWCSQYGRCFLDDEPHLLRMRTFKNEVTKDNLKNLIDMYNTLFPITQKIIHRFINNTRQHKCRNECMTQWYNHLLMPITLQSLSIELDGDVYYIFGYYDSMNNINQTPFSFTNLVDIYDKLLLDDVNFVRMSFLPTSLQREYALRYFSKSRFISEQRKCVNDSHFSINVLENLYNPNFKVQITRNCSELSVDWNEACKLVKNVSAYFDILKTSHVEFYSVSTRCRIFTRCKLEMASKLIKPNYVTSNHKTLATEVRNCKWCSINNSYTVWNDFRIKKIYNNIFSFLRALVKSNVNIGHCSSQEKIYEYVENVLNVCDDKRWKTSIMEIFNCLEPVELNDVKYVLFNYEINWDVINVLIHSIGKVPQILTLENVITIIQSIVYEWFDITYMRNTPMVTFTIDKLRRLHIGLKTVDSDSGISDVE.

The interval 1 to 81 (MATFKDACYH…CFLDDEPHLL (81 aa)) is RNA-binding. The tract at residues 42-79 (CLDCCQHTDLTYCRGCTIYHVCQWCSQYGRCFLDDEPH) is zinc-binding domain. The important for cytoskeleton localization stretch occupies residues 82 to 176 (RMRTFKNEVT…INQTPFSFTN (95 aa)). The interval 317-486 (EVRNCKWCSI…DSDSGISDVE (170 aa)) is interaction with host IRF3. The IKBKB-like degron (ILD) motif signature appears at 479-483 (DSGIS). The pLxIS motif signature appears at 480-483 (SGIS).

Belongs to the rotavirus NSP1 family. In terms of assembly, interacts (via C-terminus) with host IRF3; this interaction leads to IRF3 degradation. Interacts with host IRF7; this interaction leads to IRF7 degradation. Interacts with host CUL1 and CUL3. Interacts with host BTRC. Post-translationally, the C-terminal region is phosphorylated by host CKII/CSNK2A1. Phosphorylation of the DSGXS motif is essential for host NF-kappa-B inhibition.

It is found in the host cytoplasm. The protein resides in the host cytoskeleton. Plays a role in the inhibition of host innate immunity by inducing the degradation of key host factors required to activate interferon production such as IRF3, IRF5 or IRF7. Associates with components of cullin RING ligases (CRLs) including CUL1 or CUL3, which are essential multisubunit ubiquitination complexes, to modulate their activities. Recognizes the host NF-kappa-B regulator BTRC through the presence of a DSGXS motif in the C-terminal substrate recognition domain. This is Non-structural protein 1 from Rotavirus A (isolate RVA/Human/India/116E/1986/G9P8[11]) (RV-A).